A 166-amino-acid chain; its full sequence is Protein TIFY 11e (166 aa).

The 36-residue stretch at 65-100 folds into the Tify domain; that stretch reads ASSAAAQMTIFYGGRVLVLDECPADRAAALLRLAAS. The Jas motif lies at 123 to 148; the sequence is PVARKASLQRFMEKRKGRLAARGQPY. Residues 125-132 carry the Nuclear localization signal motif; the sequence is ARKASLQR.

It belongs to the TIFY/JAZ family. Post-translationally, ubiquitinated. Targeted for degradation by the SCF(COI1) E3 ubiquitin ligase-proteasome pathway during jasmonate signaling.

It localises to the nucleus. In terms of biological role, repressor of jasmonate responses. The chain is Protein TIFY 11e from Oryza sativa subsp. japonica (Rice).